Reading from the N-terminus, the 485-residue chain is Aspartyl/glutamyl-tRNA(Asn/Gln) amidotransferase subunit B (485 aa).

The protein belongs to the GatB/GatE family. GatB subfamily. As to quaternary structure, heterotrimer of A, B and C subunits.

The enzyme catalyses L-glutamyl-tRNA(Gln) + L-glutamine + ATP + H2O = L-glutaminyl-tRNA(Gln) + L-glutamate + ADP + phosphate + H(+). It carries out the reaction L-aspartyl-tRNA(Asn) + L-glutamine + ATP + H2O = L-asparaginyl-tRNA(Asn) + L-glutamate + ADP + phosphate + 2 H(+). Its function is as follows. Allows the formation of correctly charged Asn-tRNA(Asn) or Gln-tRNA(Gln) through the transamidation of misacylated Asp-tRNA(Asn) or Glu-tRNA(Gln) in organisms which lack either or both of asparaginyl-tRNA or glutaminyl-tRNA synthetases. The reaction takes place in the presence of glutamine and ATP through an activated phospho-Asp-tRNA(Asn) or phospho-Glu-tRNA(Gln). The protein is Aspartyl/glutamyl-tRNA(Asn/Gln) amidotransferase subunit B of Borrelia duttonii (strain Ly).